A 120-amino-acid chain; its full sequence is Large ribosomal subunit protein uL14 (120 aa).

It belongs to the universal ribosomal protein uL14 family. In terms of assembly, part of the 50S ribosomal subunit. Forms a cluster with proteins L3 and L19. In the 70S ribosome, L14 and L19 interact and together make contacts with the 16S rRNA in bridges B5 and B8.

In terms of biological role, binds to 23S rRNA. Forms part of two intersubunit bridges in the 70S ribosome. The chain is Large ribosomal subunit protein uL14 from Aster yellows witches'-broom phytoplasma (strain AYWB).